The chain runs to 217 residues: Octanoyltransferase (217 aa).

The BPL/LPL catalytic domain maps to 32-207 (SESPDELWIV…TFSQLLGYQH (176 aa)). Substrate contacts are provided by residues 71 to 78 (RGGQVTYH), 138 to 140 (SLG), and 151 to 153 (GLA). Catalysis depends on Cys169, which acts as the Acyl-thioester intermediate.

This sequence belongs to the LipB family.

It localises to the cytoplasm. It catalyses the reaction octanoyl-[ACP] + L-lysyl-[protein] = N(6)-octanoyl-L-lysyl-[protein] + holo-[ACP] + H(+). It participates in protein modification; protein lipoylation via endogenous pathway; protein N(6)-(lipoyl)lysine from octanoyl-[acyl-carrier-protein]: step 1/2. Functionally, catalyzes the transfer of endogenously produced octanoic acid from octanoyl-acyl-carrier-protein onto the lipoyl domains of lipoate-dependent enzymes. Lipoyl-ACP can also act as a substrate although octanoyl-ACP is likely to be the physiological substrate. This Shewanella sp. (strain W3-18-1) protein is Octanoyltransferase.